We begin with the raw amino-acid sequence, 28 residues long: Fibrinogen alpha chain (28 aa).

Ser3 is modified (phosphoserine).

As to quaternary structure, heterohexamer; disulfide linked. Contains 2 sets of 3 non-identical chains (alpha, beta and gamma). The 2 heterotrimers are in head to head conformation with the N-termini in a small central domain. Conversion of fibrinogen to fibrin is triggered by thrombin, which cleaves fibrinopeptides A and B from alpha and beta chains, and thus exposes the N-terminal polymerization sites responsible for the formation of the soft clot. The soft clot is converted into the hard clot by factor XIIIA which catalyzes the epsilon-(gamma-glutamyl)lysine cross-linking between gamma chains (stronger) and between alpha chains (weaker) of different monomers. In terms of processing, forms F13A-mediated cross-links between a glutamine and the epsilon-amino group of a lysine residue, forming fibronectin-fibrinogen heteropolymers.

It localises to the secreted. Its function is as follows. Cleaved by the protease thrombin to yield monomers which, together with fibrinogen beta (FGB) and fibrinogen gamma (FGG), polymerize to form an insoluble fibrin matrix. Fibrin has a major function in hemostasis as one of the primary components of blood clots. In addition, functions during the early stages of wound repair to stabilize the lesion and guide cell migration during re-epithelialization. Was originally thought to be essential for platelet aggregation, based on in vitro studies using anticoagulated blood. However, subsequent studies have shown that it is not absolutely required for thrombus formation in vivo. Enhances expression of SELP in activated platelets via an ITGB3-dependent pathway. Maternal fibrinogen is essential for successful pregnancy. Fibrin deposition is also associated with infection, where it protects against IFNG-mediated hemorrhage. May also facilitate the immune response via both innate and T-cell mediated pathways. The protein is Fibrinogen alpha chain (FGA) of Canis lupus familiaris (Dog).